The sequence spans 172 residues: Fimbrial-like protein FimF (172 aa).

Positions 1–21 (MILRRVFIAIGCVLFSPLSQA) are cleaved as a signal peptide. The cysteines at positions 41 and 81 are disulfide-linked.

It belongs to the fimbrial protein family.

It localises to the fimbrium. The sequence is that of Fimbrial-like protein FimF (fimF) from Salmonella typhimurium (strain LT2 / SGSC1412 / ATCC 700720).